Here is a 163-residue protein sequence, read N- to C-terminus: Mediator of RNA polymerase II transcription subunit 10 (163 aa).

The interval 57 to 79 (AAPDPSYVQSPPSRTGLSPADPP) is disordered. Positions 63–72 (YVQSPPSRTG) are enriched in polar residues.

This sequence belongs to the Mediator complex subunit 10 family. In terms of assembly, component of the Mediator complex.

It localises to the nucleus. Its function is as follows. Component of the Mediator complex, a coactivator involved in the regulated transcription of nearly all RNA polymerase II-dependent genes. Mediator functions as a bridge to convey information from gene-specific regulatory proteins to the basal RNA polymerase II transcription machinery. Mediator is recruited to promoters by direct interactions with regulatory proteins and serves as a scaffold for the assembly of a functional preinitiation complex with RNA polymerase II and the general transcription factors. This chain is Mediator of RNA polymerase II transcription subunit 10 (NUT2), found in Coccidioides immitis (strain RS) (Valley fever fungus).